The following is a 537-amino-acid chain: Chaperonin GroEL (537 aa).

ATP contacts are provided by residues 29 to 32 (TLGP), 86 to 90 (DGTTT), Gly413, and Asp492.

The protein belongs to the chaperonin (HSP60) family. As to quaternary structure, forms a cylinder of 14 subunits composed of two heptameric rings stacked back-to-back. Interacts with the co-chaperonin GroES.

It is found in the cytoplasm. It carries out the reaction ATP + H2O + a folded polypeptide = ADP + phosphate + an unfolded polypeptide.. Its function is as follows. Together with its co-chaperonin GroES, plays an essential role in assisting protein folding. The GroEL-GroES system forms a nano-cage that allows encapsulation of the non-native substrate proteins and provides a physical environment optimized to promote and accelerate protein folding. This chain is Chaperonin GroEL, found in Dehalococcoides mccartyi (strain ATCC BAA-2266 / KCTC 15142 / 195) (Dehalococcoides ethenogenes (strain 195)).